Consider the following 158-residue polypeptide: Transcriptional repressor NrdR (158 aa).

A zinc finger spans residues 3 to 34 (CPYCGYPDSKVIDSRPTDDNTSIRRRRECLKC). The ATP-cone domain maps to 49–139 (ILVIKKDNRR…VYRQFKDINT (91 aa)).

The protein belongs to the NrdR family. Zn(2+) is required as a cofactor.

Negatively regulates transcription of bacterial ribonucleotide reductase nrd genes and operons by binding to NrdR-boxes. This Thermoanaerobacter pseudethanolicus (strain ATCC 33223 / 39E) (Clostridium thermohydrosulfuricum) protein is Transcriptional repressor NrdR.